Reading from the N-terminus, the 367-residue chain is Phosphoribosylaminoimidazole-succinocarboxamide synthase (367 aa).

The protein belongs to the SAICAR synthetase family.

It catalyses the reaction 5-amino-1-(5-phospho-D-ribosyl)imidazole-4-carboxylate + L-aspartate + ATP = (2S)-2-[5-amino-1-(5-phospho-beta-D-ribosyl)imidazole-4-carboxamido]succinate + ADP + phosphate + 2 H(+). It participates in purine metabolism; IMP biosynthesis via de novo pathway; 5-amino-1-(5-phospho-D-ribosyl)imidazole-4-carboxamide from 5-amino-1-(5-phospho-D-ribosyl)imidazole-4-carboxylate: step 1/2. The chain is Phosphoribosylaminoimidazole-succinocarboxamide synthase from Shewanella sp. (strain MR-4).